A 300-amino-acid chain; its full sequence is Kynurenine formamidase (300 aa).

The HGGXW signature appears at 86–90; it reads HGGYW. Residue Ser157 is the Nucleophile of the active site. Active-site residues include Asp244 and His276.

The protein belongs to the kynurenine formamidase family. As to quaternary structure, homodimer.

The enzyme catalyses N-formyl-L-kynurenine + H2O = L-kynurenine + formate + H(+). It functions in the pathway amino-acid degradation; L-tryptophan degradation via kynurenine pathway; L-kynurenine from L-tryptophan: step 2/2. Functionally, catalyzes the hydrolysis of N-formyl-L-kynurenine to L-kynurenine, the second step in the kynurenine pathway of tryptophan degradation. Required for elimination of toxic metabolites. The chain is Kynurenine formamidase (KFase) from Drosophila melanogaster (Fruit fly).